Consider the following 97-residue polypeptide: MKAAALLLLAALLTFSLCRSAPDGSDARSAKAFISHRQRAEMVRRQKRHYAQDSGVAGAPPNPLEAQREVCELSPDCDELADQIGFQEAYRRFYGPV.

The first 20 residues, 1–20 (MKAAALLLLAALLTFSLCRS), serve as a signal peptide directing secretion. The propeptide occupies 21–48 (APDGSDARSAKAFISHRQRAEMVRRQKR). The Gla domain maps to 49–95 (HYAQDSGVAGAPPNPLEAQREVCELSPDCDELADQIGFQEAYRRFYG). Ca(2+) contacts are provided by glutamate 65, glutamate 69, glutamate 72, and aspartate 78. 4-carboxyglutamate is present on residues glutamate 65, glutamate 69, and glutamate 72. The cysteines at positions 71 and 77 are disulfide-linked.

It belongs to the osteocalcin/matrix Gla protein family. Gamma-carboxyglutamate residues are formed by vitamin K dependent carboxylation by GGCX. These residues are essential for the binding of calcium.

Its subcellular location is the secreted. In terms of biological role, the carboxylated form is one of the main organic components of the bone matrix, which constitutes 1-2% of the total bone protein. The carboxylated form binds strongly to apatite and calcium. In Gallus gallus (Chicken), this protein is Osteocalcin (BGLAP).